The sequence spans 859 residues: DNA mismatch repair protein MutS (859 aa).

617 to 624 (GPNMGGKS) is a binding site for ATP. Positions 801–820 (TSLPHEVAPQAPGKPSVPQQ) are disordered.

It belongs to the DNA mismatch repair MutS family.

Functionally, this protein is involved in the repair of mismatches in DNA. It is possible that it carries out the mismatch recognition step. This protein has a weak ATPase activity. This is DNA mismatch repair protein MutS from Pseudomonas fluorescens (strain ATCC BAA-477 / NRRL B-23932 / Pf-5).